The chain runs to 430 residues: UDP-N-acetylglucosamine 1-carboxyvinyltransferase (430 aa).

Position 22–23 (22–23 (KN)) interacts with phosphoenolpyruvate. Arg102 serves as a coordination point for UDP-N-acetyl-alpha-D-glucosamine. Catalysis depends on Cys126, which acts as the Proton donor. Residue Cys126 is modified to 2-(S-cysteinyl)pyruvic acid O-phosphothioketal. Residues 131-135 (RPVDL), 172-175 (KVSV), Asp317, and Ile339 contribute to the UDP-N-acetyl-alpha-D-glucosamine site.

Belongs to the EPSP synthase family. MurA subfamily.

The protein resides in the cytoplasm. The enzyme catalyses phosphoenolpyruvate + UDP-N-acetyl-alpha-D-glucosamine = UDP-N-acetyl-3-O-(1-carboxyvinyl)-alpha-D-glucosamine + phosphate. The protein operates within cell wall biogenesis; peptidoglycan biosynthesis. Its function is as follows. Cell wall formation. Adds enolpyruvyl to UDP-N-acetylglucosamine. The polypeptide is UDP-N-acetylglucosamine 1-carboxyvinyltransferase (Agrobacterium fabrum (strain C58 / ATCC 33970) (Agrobacterium tumefaciens (strain C58))).